The chain runs to 651 residues: Histone-arginine methyltransferase CARM1 (651 aa).

Positions 28–139 (ATVSVFPGAR…GHTLERSVFS (112 aa)) are interaction with C9orf72. One can recognise an SAM-dependent MTase PRMT-type domain in the interval 147–454 (AVQYFQFYGY…KRQSYDISIV (308 aa)). S-adenosyl-L-methionine is bound by residues Gln-160, Arg-169, Gly-193, and Glu-215. Position 217 is a phosphoserine (Ser-217). Lys-228 is covalently cross-linked (Glycyl lysine isopeptide (Lys-Gly) (interchain with G-Cter in ubiquitin)). S-adenosyl-L-methionine-binding residues include Glu-244 and Ser-272. Residues 347–380 (RILMAKSVKYTVNFLEAKEGDLHRIEIPFKFHML) are required for nuclear translocation. The transactivation domain stretch occupies residues 500 to 651 (TGSTYNLSSG…IPTNTMHYGS (152 aa)). A Dimethylated arginine modification is found at Arg-551. A disordered region spans residues 581–617 (RSSYQWGPGRLRGHAGSSVPMTCPTGSSGAQGGGGSS).

This sequence belongs to the class I-like SAM-binding methyltransferase superfamily. Protein arginine N-methyltransferase family. In terms of assembly, homodimer. Interacts with NR1H4. Interacts with SNRPC. Interacts with the C-terminus of NCOA2/GRIP1, NCO3/ACTR and NCOA1/SRC1. Part of a complex consisting of CARM1, EP300/P300 and NCOA2/GRIP1. Interacts with FLII, TP53, myogenic factor MEF2, EP300/P300, TRIM24, CREBBP and CTNNB1. Interacts with RELA. Identified in a complex containing CARM1, TRIM24 and NCOA2/GRIP1. Interacts with NCOA3/SRC3. Interacts with SKP2. Interacts (via PH domain-like fold) with C9orf72. Interacts with PARP1; promoting PARP1 recruimtent to replication forks. Post-translationally, auto-methylated on Arg-551. Methylation enhances transcription coactivator activity. Methylation is required for its role in the regulation of pre-mRNA alternative splicing. Phosphorylation at Ser-217 interferes with S-adenosyl-L-methionine binding and strongly reduces methyltransferase activity. Phosphorylation at Ser-217 is strongly increased during mitosis, and decreases rapidly to a very low, basal level after entry into the G1 phase of the cell cycle. Phosphorylation at Ser-217 may promote location in the cytosol. In terms of processing, ubiquitinated by E3 ubiquitin-protein ligase complex containing FBXO9 at Lys-228; leading to proteasomal degradation. As to expression, isoform 1 is expressed at low levels in brain, liver and testis. In terms of tissue distribution, isoform 2 is highly expressed in brain, liver, skeletal muscle and testis. Isoform 3 is highly expressed in spleen, liver and kidney. As to expression, isoform 4 is expressed in spleen, liver and kidney.

It localises to the nucleus. Its subcellular location is the cytoplasm. The protein localises to the chromosome. The enzyme catalyses L-arginyl-[protein] + 2 S-adenosyl-L-methionine = N(omega),N(omega)-dimethyl-L-arginyl-[protein] + 2 S-adenosyl-L-homocysteine + 2 H(+). Methylation of H3R17 (H3R17me) by CARM1 is stimulated by preacetylation of H3 'Lys-18' (H3K18ac) H3 'Lys-23' (H3K23ac) by EP300 and blocked by citrullination of H3 'Arg-17' (H3R17ci) by PADI4. Its function is as follows. Methylates (mono- and asymmetric dimethylation) the guanidino nitrogens of arginyl residues in several proteins involved in DNA packaging, transcription regulation, pre-mRNA splicing, and mRNA stability. Recruited to promoters upon gene activation together with histone acetyltransferases from EP300/P300 and p160 families, methylates histone H3 at 'Arg-17' (H3R17me), forming mainly asymmetric dimethylarginine (H3R17me2a), leading to activation of transcription via chromatin remodeling. During nuclear hormone receptor activation and TCF7L2/TCF4 activation, acts synergically with EP300/P300 and either one of the p160 histone acetyltransferases NCOA1/SRC1, NCOA2/GRIP1 and NCOA3/ACTR or CTNNB1/beta-catenin to activate transcription. During myogenic transcriptional activation, acts together with NCOA3/ACTR as a coactivator for MEF2C. During monocyte inflammatory stimulation, acts together with EP300/P300 as a coactivator for NF-kappa-B. Acts as a coactivator for PPARG, promotes adipocyte differentiation and the accumulation of brown fat tissue. Plays a role in the regulation of pre-mRNA alternative splicing by methylation of splicing factors. Also seems to be involved in p53/TP53 transcriptional activation. Methylates EP300/P300, both at 'Arg-2142', which may loosen its interaction with NCOA2/GRIP1, and at 'Arg-580' and 'Arg-604' in the KIX domain, which impairs its interaction with CREB and inhibits CREB-dependent transcriptional activation. Also methylates arginine residues in RNA-binding proteins PABPC1, ELAVL1 and ELAV4, which may affect their mRNA-stabilizing properties and the half-life of their target mRNAs. Acts as a transcriptional coactivator of ACACA/acetyl-CoA carboxylase by enriching H3R17 methylation at its promoter, thereby positively regulating fatty acid synthesis. Independently of its methyltransferase activity, involved in replication fork progression: promotes PARP1 recruitment to replication forks, leading to poly-ADP-ribosylation of chromatin at replication forks and reduced fork speed. Isoform 3 specifically affects pre-mRNA splicing. This activity is independent from methyltransferase activity. The protein is Histone-arginine methyltransferase CARM1 (Carm1) of Rattus norvegicus (Rat).